A 427-amino-acid polypeptide reads, in one-letter code: Glutamate-1-semialdehyde 2,1-aminomutase (427 aa).

At lysine 265 the chain carries N6-(pyridoxal phosphate)lysine.

Belongs to the class-III pyridoxal-phosphate-dependent aminotransferase family. HemL subfamily. Homodimer. It depends on pyridoxal 5'-phosphate as a cofactor.

The protein resides in the cytoplasm. It carries out the reaction (S)-4-amino-5-oxopentanoate = 5-aminolevulinate. The protein operates within porphyrin-containing compound metabolism; protoporphyrin-IX biosynthesis; 5-aminolevulinate from L-glutamyl-tRNA(Glu): step 2/2. The polypeptide is Glutamate-1-semialdehyde 2,1-aminomutase (Stutzerimonas stutzeri (strain A1501) (Pseudomonas stutzeri)).